A 1497-amino-acid chain; its full sequence is DNA-directed RNA polymerase subunit beta' (1497 aa).

4 residues coordinate Zn(2+): Cys-67, Cys-69, Cys-82, and Cys-85. Mg(2+)-binding residues include Asp-499, Asp-501, and Asp-503. Zn(2+) is bound by residues Cys-867, Cys-943, Cys-950, and Cys-953. Residues 1476–1497 are disordered; it reads ESNATERVVEEPATREGFANER. The segment covering 1482–1497 has biased composition (basic and acidic residues); the sequence is RVVEEPATREGFANER.

It belongs to the RNA polymerase beta' chain family. In terms of assembly, the RNAP catalytic core consists of 2 alpha, 1 beta, 1 beta' and 1 omega subunit. When a sigma factor is associated with the core the holoenzyme is formed, which can initiate transcription. It depends on Mg(2+) as a cofactor. The cofactor is Zn(2+).

It catalyses the reaction RNA(n) + a ribonucleoside 5'-triphosphate = RNA(n+1) + diphosphate. In terms of biological role, DNA-dependent RNA polymerase catalyzes the transcription of DNA into RNA using the four ribonucleoside triphosphates as substrates. In Pelodictyon phaeoclathratiforme (strain DSM 5477 / BU-1), this protein is DNA-directed RNA polymerase subunit beta'.